The chain runs to 469 residues: Glutamate--tRNA ligase (469 aa).

The 'HIGH' region signature appears at 11–21 (PSPTGFIHLGN). Residues 118–131 (GEKPRYDGTWRPEP) are compositionally biased toward basic and acidic residues. Residues 118–139 (GEKPRYDGTWRPEPGKVLPEPP) form a disordered region. The short motif at 243–247 (KMSKR) is the 'KMSKS' region element. ATP is bound at residue Lys-246.

It belongs to the class-I aminoacyl-tRNA synthetase family. Glutamate--tRNA ligase type 1 subfamily. Monomer.

Its subcellular location is the cytoplasm. It catalyses the reaction tRNA(Glu) + L-glutamate + ATP = L-glutamyl-tRNA(Glu) + AMP + diphosphate. Catalyzes the attachment of glutamate to tRNA(Glu) in a two-step reaction: glutamate is first activated by ATP to form Glu-AMP and then transferred to the acceptor end of tRNA(Glu). The protein is Glutamate--tRNA ligase of Burkholderia pseudomallei (strain 1106a).